The sequence spans 598 residues: DNA ligase (598 aa).

ATP is bound at residue Asp-258. Lys-260 functions as the N6-AMP-lysine intermediate in the catalytic mechanism. ATP-binding residues include Arg-265, Arg-280, Glu-310, Phe-350, Arg-427, and Lys-433.

It belongs to the ATP-dependent DNA ligase family. Mg(2+) is required as a cofactor.

It carries out the reaction ATP + (deoxyribonucleotide)n-3'-hydroxyl + 5'-phospho-(deoxyribonucleotide)m = (deoxyribonucleotide)n+m + AMP + diphosphate.. Its function is as follows. DNA ligase that seals nicks in double-stranded DNA during DNA replication, DNA recombination and DNA repair. The protein is DNA ligase of Sulfolobus acidocaldarius (strain ATCC 33909 / DSM 639 / JCM 8929 / NBRC 15157 / NCIMB 11770).